The following is a 214-amino-acid chain: Probable transaldolase (214 aa).

The active-site Schiff-base intermediate with substrate is the K83.

It belongs to the transaldolase family. Type 3B subfamily.

The protein resides in the cytoplasm. The catalysed reaction is D-sedoheptulose 7-phosphate + D-glyceraldehyde 3-phosphate = D-erythrose 4-phosphate + beta-D-fructose 6-phosphate. The protein operates within carbohydrate degradation; pentose phosphate pathway; D-glyceraldehyde 3-phosphate and beta-D-fructose 6-phosphate from D-ribose 5-phosphate and D-xylulose 5-phosphate (non-oxidative stage): step 2/3. In terms of biological role, transaldolase is important for the balance of metabolites in the pentose-phosphate pathway. The polypeptide is Probable transaldolase (Desulfatibacillum aliphaticivorans).